The following is a 333-amino-acid chain: Global transcription regulator sge1 (333 aa).

2 disordered regions span residues 93-139 (PPGE…PSVP) and 241-307 (QHQS…PQYQ).

It belongs to the MIT1/WOR1 family.

The protein localises to the nucleus. Functionally, global transcriptional regulator that acts as an activator of secondary metabolism. Required for expression of a yet uncharacterized secondary metabolism gene cluster containing a non-canonical non-ribosomal peptide synthetase. Not required for conidiogenesis nor for pathogenicity, but is involved in vegetative growth. The protein is Global transcription regulator sge1 of Gibberella fujikuroi (strain CBS 195.34 / IMI 58289 / NRRL A-6831) (Bakanae and foot rot disease fungus).